Here is a 286-residue protein sequence, read N- to C-terminus: Putative chaperone BssE (286 aa).

Residues 47–54 and 108–115 contribute to the ATP site; these read GKQGCGKS and GCVIHLEE.

The protein belongs to the CbbQ/NirQ/NorQ/GpvN family.

Functionally, may have a role in assembly and/or activation of benzylsuccinate synthase. This Thauera aromatica protein is Putative chaperone BssE (bssE).